Here is a 59-residue protein sequence, read N- to C-terminus: Large ribosomal subunit protein bL32 (59 aa).

It belongs to the bacterial ribosomal protein bL32 family.

The sequence is that of Large ribosomal subunit protein bL32 from Synechococcus sp. (strain RCC307).